A 490-amino-acid chain; its full sequence is ATP synthase subunit beta, chloroplastic (490 aa).

170-177 serves as a coordination point for ATP; it reads GGAGVGKT.

This sequence belongs to the ATPase alpha/beta chains family. F-type ATPases have 2 components, CF(1) - the catalytic core - and CF(0) - the membrane proton channel. CF(1) has five subunits: alpha(3), beta(3), gamma(1), delta(1), epsilon(1). CF(0) has four main subunits: a(1), b(1), b'(1) and c(9-12).

The protein localises to the plastid. It localises to the chloroplast thylakoid membrane. It carries out the reaction ATP + H2O + 4 H(+)(in) = ADP + phosphate + 5 H(+)(out). Functionally, produces ATP from ADP in the presence of a proton gradient across the membrane. The catalytic sites are hosted primarily by the beta subunits. This Ipomoea aquatica (Water spinach) protein is ATP synthase subunit beta, chloroplastic.